The sequence spans 523 residues: GMP synthase [glutamine-hydrolyzing] (523 aa).

The Glutamine amidotransferase type-1 domain maps to 9 to 198 (PVLVVDFGAQ…LTEIAGLEQN (190 aa)). Residue Cys-86 is the Nucleophile of the active site. Catalysis depends on residues His-172 and Glu-174. The GMPS ATP-PPase domain maps to 199–397 (WTAANIAEEL…LGLPEEIVGR (199 aa)). ATP is bound at residue 227 to 233 (SGGVDSA).

Homodimer.

The enzyme catalyses XMP + L-glutamine + ATP + H2O = GMP + L-glutamate + AMP + diphosphate + 2 H(+). It participates in purine metabolism; GMP biosynthesis; GMP from XMP (L-Gln route): step 1/1. Functionally, catalyzes the synthesis of GMP from XMP. This is GMP synthase [glutamine-hydrolyzing] from Corynebacterium glutamicum (strain R).